A 517-amino-acid chain; its full sequence is DNA-binding protein Ikaros (517 aa).

Residues 1–71 form a disordered region; the sequence is MDVDEGQDMS…QSDEENGRAC (71 aa). Residue serine 13 is modified to Phosphoserine. Phosphothreonine is present on threonine 23. Residues 37-47 show a composition bias toward polar residues; the sequence is LSTTSGAQQNS. Residue lysine 58 forms a Glycyl lysine isopeptide (Lys-Gly) (interchain with G-Cter in SUMO) linkage. A phosphoserine mark is found at serine 63 and serine 101. Residues 117 to 139 form a C2H2-type 1 zinc finger; sequence LKCDICGIVCIGPNVLMVHKRSH. The residue at position 140 (threonine 140) is a Phosphothreonine. The segment at 144–166 adopts a C2H2-type 2 zinc-finger fold; sequence FQCNQCGASFTQKGNLLRHIKLH. The tract at residues 153–162 is required for both high-affinity DNA binding and pericentromeric heterochromatin localization; sequence FTQKGNLLRH. At serine 167 the chain carries Phosphoserine. A C2H2-type 3 zinc finger spans residues 172 to 194; sequence FKCHLCNYACRRRDALTGHLRTH. The interval 179–194 is required for both high-affinity DNA binding and pericentromeric heterochromatin localization; that stretch reads YACRRRDALTGHLRTH. A Phosphoserine modification is found at serine 195. The C2H2-type 4 zinc-finger motif lies at 200–223; sequence HKCGYCGRSYKQRSSLEEHKERCH. Lysine 239 is covalently cross-linked (Glycyl lysine isopeptide (Lys-Gly) (interchain with G-Cter in SUMO)). A phosphoserine mark is found at serine 259, serine 287, serine 293, serine 357, serine 360, serine 384, serine 386, serine 388, and serine 392. The segment at 376–400 is disordered; sequence SVSSEREASPSNSCQDSTDTESNAE. A Phosphothreonine modification is found at threonine 393. 2 positions are modified to phosphoserine: serine 397 and serine 440. C2H2-type zinc fingers lie at residues 457 to 479 and 488 to 512; these read YKCE…MGCH and FECN…RGEH. The required for binding PP1CC stretch occupies residues 463-466; sequence RVLF.

It belongs to the Ikaros C2H2-type zinc-finger protein family. Heterodimer with other IKAROS family members. Interacts with IKZF4 and IKZF5. Component of the chromatin-remodeling NuRD repressor complex which includes at least HDAC1, HDAC2, RBBP4, RBBP7, IKZF1, MTA2, MBD2, MBD3, MTA1L1, CHD3 and CHD4. Interacts directly with the CHD4 component of the NuRD complex. Interacts directly with SMARCA4; the interaction associates IKFZ1 with the BAF complex. Interacts with SUMO1; the interaction sumoylates IKAROS, promoted by PIAS2 and PIAS3. Interacts with PIAS2 (isoform alpha); the interaction promotes sumoylation and reduces transcription repression. Interacts, to a lesser extent, with PIAS3. Interacts with PPP1CC; the interaction targets PPP1CC to pericentromeric heterochromatin, dephosphorylates IKAROS, stabilizes it and prevents it from degradation. Interacts with IKZF3. In terms of processing, phosphorylation at Ser-357 and Ser-360 downstream of SYK induces nuclear translocation. Phosphorylation controls cell-cycle progression from late G(1) stage to S stage. Hyperphosphorylated during G2/M phase. Dephosphorylated state during late G(1) phase. Phosphorylation on Thr-140 is required for DNA and pericentromeric location during mitosis. CK2 is the main kinase, in vitro. GSK3 and CDK may also contribute to phosphorylation of the C-terminal serine and threonine residues. Phosphorylation on these C-terminal residues reduces the DNA-binding ability. Phosphorylation/dephosphorylation events on Ser-13 and Ser-293 regulate TDT expression during thymocyte differentiation. Dephosphorylation by protein phosphatase 1 regulates stability and pericentromeric heterochromatin location. Phosphorylated in both lymphoid and non-lymphoid tissues. Post-translationally, sumoylated. Simultaneous sumoylation on the 2 sites results in a loss of both HDAC-dependent and HDAC-independent repression. Has no effect on pericentromeric heterochromatin location. Desumoylated by SENP1. Polyubiquitinated. As to expression, strongly expressed in T-cells and their progenitors,in B-cells, and in all early embryonic retinal progenitor cells (RPCs). Isoforms V and VI are the predominant isoforms in lymphocytes.

It is found in the nucleus. Its subcellular location is the cytoplasm. Transcription regulator of hematopoietic cell differentiation. Binds gamma-satellite DNA. Binds with higher affinity to gamma satellite A. Plays a role in the development of lymphocytes, B- and T-cells. Binds and activates the enhancer (delta-A element) of the CD3-delta gene. Repressor of the TDT (terminal deoxynucleotidyltransferase) gene during thymocyte differentiation. Regulates transcription through association with both HDAC-dependent and HDAC-independent complexes. Targets the 2 chromatin-remodeling complexes, NuRD and BAF (SWI/SNF), in a single complex (PYR complex), to the beta-globin locus in adult erythrocytes. Increases normal apoptosis in adult erythroid cells. Confers early temporal competence to retinal progenitor cells (RPCs). Function is isoform-specific and is modulated by dominant-negative inactive isoforms. This is DNA-binding protein Ikaros (Ikzf1) from Mus musculus (Mouse).